A 53-amino-acid polypeptide reads, in one-letter code: Large ribosomal subunit protein eL40 (53 aa).

The protein belongs to the eukaryotic ribosomal protein eL40 family.

This Pyrobaculum islandicum (strain DSM 4184 / JCM 9189 / GEO3) protein is Large ribosomal subunit protein eL40.